Here is a 612-residue protein sequence, read N- to C-terminus: Mineralocorticoid receptor (612 aa).

A modulating region spans residues 1 to 228 (GNEIADSTVS…STGPSRPSKV (228 aa)). Positions 229, 232, 246, 249, 269, 275, 285, and 288 each coordinate Zn(2+). 2 consecutive NR C4-type zinc fingers follow at residues 229-249 (CLVCGDEASGCHYGVVTCGSC) and 269-293 (CAGRNDCIIDKIRRKNCPACRLQKC). A DNA-binding region (nuclear receptor) is located at residues 229–298 (CLVCGDEASG…RLQKCLQAGM (70 aa)). A hinge region spans residues 299-349 (NLGARKSKKLGKLKGVHEEHPQQPLQQTPTASPKEDTTLTSSSKEPSANSN). The segment at 310–348 (KLKGVHEEHPQQPLQQTPTASPKEDTTLTSSSKEPSANS) is disordered. Low complexity predominate over residues 339 to 348 (SSSKEPSANS). Residues 350–592 (SLVPLISAVS…EFPAMLVEII (243 aa)) enclose the NR LBD domain. 21-hydroxyprogesterone contacts are provided by Asn-398 and Gln-404. Positions 398 and 404 each coordinate aldosterone. Progesterone-binding residues include Asn-398 and Gln-404. An important for coactivator binding region spans residues 410 to 413 (KWAK). Residues Arg-445 and Thr-573 each contribute to the 21-hydroxyprogesterone site. Positions 445 and 573 each coordinate aldosterone. Residues Arg-445 and Thr-573 each contribute to the progesterone site.

This sequence belongs to the nuclear hormone receptor family. NR3 subfamily.

Its subcellular location is the cytoplasm. It localises to the nucleus. Its function is as follows. Receptor for both mineralocorticoids (MC) such as aldosterone and glucocorticoids (GC) such as corticosterone or cortisol. Binds to mineralocorticoid response elements (MRE) and transactivates target genes. The effect of MC is to increase ion and water transport and thus raise extracellular fluid volume and blood pressure and lower potassium levels. This Xenopus laevis (African clawed frog) protein is Mineralocorticoid receptor (nr3c2).